The chain runs to 161 residues: Transcription elongation factor GreA (161 aa).

This sequence belongs to the GreA/GreB family.

Functionally, necessary for efficient RNA polymerase transcription elongation past template-encoded arresting sites. The arresting sites in DNA have the property of trapping a certain fraction of elongating RNA polymerases that pass through, resulting in locked ternary complexes. Cleavage of the nascent transcript by cleavage factors such as GreA or GreB allows the resumption of elongation from the new 3'terminus. GreA releases sequences of 2 to 3 nucleotides. The chain is Transcription elongation factor GreA from Desulfotalea psychrophila (strain LSv54 / DSM 12343).